Here is a 149-residue protein sequence, read N- to C-terminus: D-aminoacyl-tRNA deacylase (149 aa).

Residues 137–138 (GP) carry the Gly-cisPro motif, important for rejection of L-amino acids motif.

Belongs to the DTD family. In terms of assembly, homodimer.

The protein localises to the cytoplasm. It catalyses the reaction glycyl-tRNA(Ala) + H2O = tRNA(Ala) + glycine + H(+). The enzyme catalyses a D-aminoacyl-tRNA + H2O = a tRNA + a D-alpha-amino acid + H(+). Its function is as follows. An aminoacyl-tRNA editing enzyme that deacylates mischarged D-aminoacyl-tRNAs. Also deacylates mischarged glycyl-tRNA(Ala), protecting cells against glycine mischarging by AlaRS. Acts via tRNA-based rather than protein-based catalysis; rejects L-amino acids rather than detecting D-amino acids in the active site. By recycling D-aminoacyl-tRNA to D-amino acids and free tRNA molecules, this enzyme counteracts the toxicity associated with the formation of D-aminoacyl-tRNA entities in vivo and helps enforce protein L-homochirality. This chain is D-aminoacyl-tRNA deacylase, found in Thermosipho africanus (strain TCF52B).